Reading from the N-terminus, the 294-residue chain is ATP synthase gamma chain (294 aa).

The protein belongs to the ATPase gamma chain family. As to quaternary structure, F-type ATPases have 2 components, CF(1) - the catalytic core - and CF(0) - the membrane proton channel. CF(1) has five subunits: alpha(3), beta(3), gamma(1), delta(1), epsilon(1). CF(0) has three main subunits: a, b and c.

It localises to the cell inner membrane. In terms of biological role, produces ATP from ADP in the presence of a proton gradient across the membrane. The gamma chain is believed to be important in regulating ATPase activity and the flow of protons through the CF(0) complex. The polypeptide is ATP synthase gamma chain (Rhizorhabdus wittichii (strain DSM 6014 / CCUG 31198 / JCM 15750 / NBRC 105917 / EY 4224 / RW1) (Sphingomonas wittichii)).